We begin with the raw amino-acid sequence, 101 residues long: Small ribosomal subunit protein uS14 (101 aa).

Belongs to the universal ribosomal protein uS14 family. As to quaternary structure, part of the 30S ribosomal subunit. Contacts proteins S3 and S10.

In terms of biological role, binds 16S rRNA, required for the assembly of 30S particles and may also be responsible for determining the conformation of the 16S rRNA at the A site. The chain is Small ribosomal subunit protein uS14 from Alkalilimnicola ehrlichii (strain ATCC BAA-1101 / DSM 17681 / MLHE-1).